The following is a 71-amino-acid chain: Cell division protein ZapB (71 aa).

Positions 5–67 (LEVLEQLESK…RALLGKMEQM (63 aa)) form a coiled coil.

Belongs to the ZapB family. In terms of assembly, homodimer. The ends of the coiled-coil dimer bind to each other, forming polymers. Interacts with FtsZ.

The protein localises to the cytoplasm. In terms of biological role, non-essential, abundant cell division factor that is required for proper Z-ring formation. It is recruited early to the divisome by direct interaction with FtsZ, stimulating Z-ring assembly and thereby promoting cell division earlier in the cell cycle. Its recruitment to the Z-ring requires functional FtsA or ZipA. The sequence is that of Cell division protein ZapB from Aeromonas salmonicida (strain A449).